Consider the following 101-residue polypeptide: Large ribosomal subunit protein eL36 (101 aa).

Disordered stretches follow at residues 1–31 (MGEI…GFLS) and 75–101 (GTHM…SKGE).

The protein belongs to the eukaryotic ribosomal protein eL36 family.

This is Large ribosomal subunit protein eL36 (RL36) from Ulva compressa (Green alga).